The chain runs to 156 residues: Transcription antitermination protein NusB (156 aa).

This sequence belongs to the NusB family.

Its function is as follows. Involved in transcription antitermination. Required for transcription of ribosomal RNA (rRNA) genes. Binds specifically to the boxA antiterminator sequence of the ribosomal RNA (rrn) operons. This chain is Transcription antitermination protein NusB, found in Rickettsia akari (strain Hartford).